A 273-amino-acid chain; its full sequence is uncharacterized protein (273 aa).

It localises to the virion. This is an uncharacterized protein from Acanthamoeba polyphaga (Amoeba).